Reading from the N-terminus, the 786-residue chain is MGLQPLEFSDCYLDSPWFRERIRAHEAELERTNKFIKELIKDGKNLIAATKSLSVAQRKFAHSLRDFKFEFIGDAVTDDERCIDASLREFSNFLKNLEEQREIMALSVTETLIKPLEKFRKEQLGAVKEEKKKFDKETEKNYSLIDKHLNLSAKKKDSHLQEADIQVEQNRQHFYELSLEYVCKLQEIQERKKFEFVEPMLSFFQGMFTFYHQGHELAKDFNHYKMELQINIQNTRNRFEGTRSEVEELMNKIRQNPKDHKRASQFTAEGYLYVQEKRPAPFGSSWVKHYCMYRKAAKKFNMIPFEHRSGGKLGDGEVFFLKECTKRHTDSIDRRFCFDIEAADRPGVSLTMQAFSEEERKQWLEALGGKEALSHSFNTAIIPRPEGNAQLDKMGFTIIRKCISAVETRGINDQGLYRVVGVSSKVQRLLSMLMDVKTCNEVDLENSADWEVKTITSALKQYLRSLPEPLMTYELHGDFIVPAKSGSPESRVNAIHFLVHKLPEKNKEMLDILVKHLTNVSNHSKQNLMTVANLGVVFGPTLMRPQEETVAALMDLKFQNIVVEILIENHEKIFRTPPDTTFPEPTCLSASPPNAPPRQSKRQGQRTKRPVAVYNLCLELEDGDNPYPSKEDTPTSSLDSLSSPSPVTTAVPGPPGPDKNHLLADGGSFGDWASTIPGQTRSSMVQWLNPQSPTTTSSNSAVTPLSPGSSPFPFSPPATVADKPPESIRSRKARAVYPCEAEHSSELSFEIGAIFEDVQTSREPGWLEGTLNGKRGLIPQNYVKLL.

The region spanning 7–262 (EFSDCYLDSP…IRQNPKDHKR (256 aa)) is the BAR domain. In terms of domain architecture, PH spans 265-372 (QFTAEGYLYV…WLEALGGKEA (108 aa)). One can recognise a Rho-GAP domain in the interval 389 to 574 (AQLDKMGFTI…ILIENHEKIF (186 aa)). 2 disordered regions span residues 576 to 608 (TPPD…QRTK) and 621 to 727 (EDGD…PPES). Over residues 599-608 (QSKRQGQRTK) the composition is skewed to basic residues. Low complexity predominate over residues 634 to 651 (PTSSLDSLSSPSPVTTAV). Positions 676-688 (IPGQTRSSMVQWL) are enriched in polar residues. The span at 689-712 (NPQSPTTTSSNSAVTPLSPGSSPF) shows a compositional bias: low complexity. An SH3 domain is found at 728–786 (IRSRKARAVYPCEAEHSSELSFEIGAIFEDVQTSREPGWLEGTLNGKRGLIPQNYVKLL).

Interacts with PKN3. Interacts with caspase-activated PAK2 proteolytic fragment PAK-2p34; the interaction does not affect GRAF2/ARHGAP10 GTPase activation activity towards RHOA and CDC42. Interacts via its SH3 domain with PTK2/FAK1. Interacts with PTK2B/PYK2; the interaction negatively regulates GRAF2/ARHGAP10 GTPase-activating activity. Interacts with MICAL1 and WDR44; complex formation might transit from GRAF2/ARHGAP10-MICAL1 to GRAF2/ARHGAP10-WDR44 complexes. Phosphorylated. Phosphorylated in vitro by constitutive active PKN3. In terms of tissue distribution, high levels of expression in heart and skeletal muscle.

It is found in the cytoplasm. The protein resides in the perinuclear region. It localises to the cell membrane. The protein localises to the endosome membrane. In terms of biological role, GTPase-activating protein that catalyzes the conversion of active GTP-bound Rho GTPases to their inactive GDP-bound form, thus suppressing various Rho GTPase-mediated cellular processes. Also converts Cdc42 to an inactive GDP-bound state. Essential for PTKB2 regulation of cytoskeletal organization via Rho family GTPases. Inhibits PAK2 proteolytic fragment PAK-2p34 kinase activity and changes its localization from the nucleus to the perinuclear region. Stabilizes PAK-2p34 thereby increasing stimulation of cell death. Associates with MICAL1 on the endosomal membrane to promote Rab8-Rab10-dependent tubule extension. After dissociation with MICAL1, recruits WDR44 which connects the endoplasmic reticulum (ER) with the endosomal tubule, thereby participating in the export of a subset of neosynthesized proteins. The polypeptide is Rho GTPase-activating protein 10 (ARHGAP10) (Homo sapiens (Human)).